We begin with the raw amino-acid sequence, 113 residues long: Protein AaeX (113 aa).

Helical transmembrane passes span 3-23 (LLPV…EMIL) and 43-63 (FVWH…YLIS).

This sequence belongs to the AaeX family.

The protein resides in the cell membrane. The sequence is that of Protein AaeX from Sodalis glossinidius (strain morsitans).